We begin with the raw amino-acid sequence, 305 residues long: Serine/threonine-protein kinase 16 (305 aa).

Residue Gly-2 is the site of N-myristoyl glycine attachment. Residues Cys-6 and Cys-8 are each lipidated (S-palmitoyl cysteine). The region spanning 20–293 (YLFVQKLGEG…PVLLSQLEAL (274 aa)) is the Protein kinase domain. Residues 26-34 (LGEGGFSYV) and Lys-49 contribute to the ATP site. The active-site Proton acceptor is Asp-148. Residues 166-202 (DLGSMNQACIQVEGSRQALALQDWAAQRCTISYRAPE) form an activation loop region. Ser-197 is subject to Phosphoserine; by autocatalysis. Tyr-198 carries the post-translational modification Phosphotyrosine; by autocatalysis.

This sequence belongs to the protein kinase superfamily. Ser/Thr protein kinase family. In terms of assembly, monomer. Interacts with DRG1 (via its N-terminal); the interaction phosphorylates DRG1. In terms of processing, mainly autophosphorylated on serine/threonine residues. Also autophosphorylated on Tyr-198. As to expression, ubiquitously expressed at low levels. Relatively higher levels in testis, kidney and liver.

It is found in the cytoplasm. The protein localises to the perinuclear region. It localises to the membrane. The catalysed reaction is L-seryl-[protein] + ATP = O-phospho-L-seryl-[protein] + ADP + H(+). It carries out the reaction L-threonyl-[protein] + ATP = O-phospho-L-threonyl-[protein] + ADP + H(+). The enzyme catalyses L-tyrosyl-[protein] + ATP = O-phospho-L-tyrosyl-[protein] + ADP + H(+). Its function is as follows. Membrane-associated protein kinase that phosphorylates on serine and threonine residues. In vitro substrates include DRG1, ENO1 and EIF4EBP1. Also autophosphorylates. May be involved in secretory vesicle trafficking or intracellular signaling. May have a role in regulating stromal-epithelial interactions that occur during ductal morphogenesis in the mammary gland. May be involved in TGF-beta signaling. Able to autophosphorylate on Tyr residue; it is however unclear whether it has tyrosine-protein kinase toward other proteins. The polypeptide is Serine/threonine-protein kinase 16 (Stk16) (Mus musculus (Mouse)).